The primary structure comprises 485 residues: Delta(14)-sterol reductase ERG24A (485 aa).

4 helical membrane passes run 18-38 (FFGPPGAFAISFFLPVLVYVF), 77-97 (GLVSWNGTLAVIGYNVLSLIL), 131-151 (LAVLAAGTIAQGAEFPVWTFM), and 155-175 (FIQILSANIIYSYLVSTFVYV). Asn-240 is a glycosylation site (N-linked (GlcNAc...) asparagine). The next 4 membrane-spanning stretches (helical) occupy residues 259-279 (ILITAVQALYVFDSWWNEPAI), 285-305 (ITTDGFGMMLAFGDIVWVPYV), 319-339 (SLGPLGLAAMLGLIGLGFYIF), and 431-451 (AQGWGMLITYFYILYFGILLI).

It belongs to the ERG4/ERG24 family.

It localises to the endoplasmic reticulum membrane. It catalyses the reaction 4,4-dimethyl-5alpha-cholesta-8,24-dien-3beta-ol + NADP(+) = 4,4-dimethyl-5alpha-cholesta-8,14,24-trien-3beta-ol + NADPH + H(+). Its pathway is steroid metabolism; ergosterol biosynthesis. Delta(14)-sterol reductase; part of the third module of ergosterol biosynthesis pathway that includes the late steps of the pathway. Catalyzes the reduction of the C14=C15 double bond within 4,4,24-trimethyl ergosta-8,14,24(28)-trienolto produce 4,4-dimethylfecosterol. The third module or late pathway involves the ergosterol synthesis itself through consecutive reactions that mainly occur in the endoplasmic reticulum (ER) membrane. Firstly, the squalene synthase ERG9 catalyzes the condensation of 2 farnesyl pyrophosphate moieties to form squalene, which is the precursor of all steroids. Squalene synthase is crucial for balancing the incorporation of farnesyl diphosphate (FPP) into sterol and nonsterol isoprene synthesis. Secondly, squalene is converted into lanosterol by the consecutive action of the squalene epoxidase ERG1 and the lanosterol synthase ERG7. Then, the delta(24)-sterol C-methyltransferase ERG6 methylates lanosterol at C-24 to produce eburicol. Eburicol is the substrate of the sterol 14-alpha demethylase encoded by CYP51A, CYP51B and CYP51C, to yield 4,4,24-trimethyl ergosta-8,14,24(28)-trienol. CYP51B encodes the enzyme primarily responsible for sterol 14-alpha-demethylation, and plays an essential role in ascospore formation. CYP51A encodes an additional sterol 14-alpha-demethylase, induced on ergosterol depletion and responsible for the intrinsic variation in azole sensitivity. The third CYP51 isoform, CYP51C, does not encode a sterol 14-alpha-demethylase, but is required for full virulence on host wheat ears. The C-14 reductase ERG24 then reduces the C14=C15 double bond which leads to 4,4-dimethylfecosterol. A sequence of further demethylations at C-4, involving the C-4 demethylation complex containing the C-4 methylsterol oxidases ERG25, the sterol-4-alpha-carboxylate 3-dehydrogenase ERG26 and the 3-keto-steroid reductase ERG27, leads to the production of fecosterol via 4-methylfecosterol. ERG28 has a role as a scaffold to help anchor ERG25, ERG26 and ERG27 to the endoplasmic reticulum. The C-8 sterol isomerase ERG2 then catalyzes the reaction which results in unsaturation at C-7 in the B ring of sterols and thus converts fecosterol to episterol. The sterol-C5-desaturases ERG3A and ERG3BB then catalyze the introduction of a C-5 double bond in the B ring to produce 5-dehydroepisterol. The C-22 sterol desaturases ERG5A and ERG5B further convert 5-dehydroepisterol into ergosta-5,7,22,24(28)-tetraen-3beta-ol by forming the C-22(23) double bond in the sterol side chain. Finally, ergosta-5,7,22,24(28)-tetraen-3beta-ol is substrate of the C-24(28) sterol reductase ERG4 to produce ergosterol. This Gibberella zeae (strain ATCC MYA-4620 / CBS 123657 / FGSC 9075 / NRRL 31084 / PH-1) (Wheat head blight fungus) protein is Delta(14)-sterol reductase ERG24A.